Consider the following 194-residue polypeptide: CD-NTase-associated protein 15 (194 aa).

The required for cell toxicity stretch occupies residues Met-1–Asp-73. The next 2 helical transmembrane spans lie at Ile-15–Val-35 and Ile-43–Ile-63.

It belongs to the CBASS Cap15 membrane effector family. As to quaternary structure, the beta barrel domain oligomerizes; in the presence of cyclic nucleotides (probably 3',3'-cGAMP, but the cognate CD-NTase makes at least 4 other cyclic nucleotides) higher-level oligomers are detected.

Its subcellular location is the cell inner membrane. In terms of biological role, effector protein of a CBASS antivirus system. CBASS (cyclic oligonucleotide-based antiphage signaling system) provides immunity against bacteriophages. The CD-NTase protein (CdnB) synthesizes cyclic nucleotides in response to infection; these serve as specific second messenger signals. The signals activate a diverse range of effectors, leading to bacterial cell death and thus abortive phage infection. Causes cell death in response to 3',3'-cGAMP upon coexpression in E.coli with V.cholerae DncV; inactivating DncV prevents cell death. Upon induction in E.coli with non-cognate DncV, the cell inner membrane shrinks and separates from the cell wall with a concomitant increase in the periplasm. Binds cyclic nucleotide second messenger 3',3'-cGAMP, probably oligomerizing, and induces cell membrane shrinkage and rupture, leading to cell death. A type I CBASS system. Protects E.coli against phage infection. When the CBASS operon (cdnB-cap15) is introduced in E.coli MG1655 there is about 100-fold protection against phage T2 and about 10-fold protection against phage T5 and T6. The sequence is that of CD-NTase-associated protein 15 from Escherichia albertii.